Reading from the N-terminus, the 288-residue chain is 33 kDa chaperonin (288 aa).

2 disulfides stabilise this stretch: Cys233/Cys235 and Cys267/Cys270.

The protein belongs to the HSP33 family. In terms of processing, under oxidizing conditions two disulfide bonds are formed involving the reactive cysteines. Under reducing conditions zinc is bound to the reactive cysteines and the protein is inactive.

The protein localises to the cytoplasm. Functionally, redox regulated molecular chaperone. Protects both thermally unfolding and oxidatively damaged proteins from irreversible aggregation. Plays an important role in the bacterial defense system toward oxidative stress. This is 33 kDa chaperonin from Pasteurella multocida (strain Pm70).